Reading from the N-terminus, the 1111-residue chain is ATP-dependent DNA helicase mph1 (1111 aa).

2 stretches are compositionally biased toward acidic residues: residues 1-18 (MSVS…EIDD) and 47-65 (VFDE…DEFQ). Disordered stretches follow at residues 1-81 (MSVS…EDVE), 101-144 (FVTQ…HQPD), 210-240 (AFDS…RTNR), and 259-280 (IPSQ…PTHH). Composition is skewed to polar residues over residues 132–143 (PTTTTVDASHQP) and 215–238 (LSLS…QFRT). Positions 306 to 474 (IAQRGLFHNL…AVIDGLGIAK (169 aa)) constitute a Helicase ATP-binding domain. 319–326 (LPTGLGKT) lines the ATP pocket. Residues 422–425 (DEAH) carry the DEAH box motif. Positions 644–818 (YLKQVVLNHF…GTRFTFHDDT (175 aa)) constitute a Helicase C-terminal domain. Disordered stretches follow at residues 836–898 (IDIP…RKPT), 998–1047 (SVLS…CTPE), and 1092–1111 (AERH…DTEE). The span at 852-864 (KRARPPKRPPKKF) shows a compositional bias: basic residues.

It belongs to the DEAD box helicase family. DEAH subfamily. FANCM sub-subfamily. As to quaternary structure, interacts with the MHF histone-fold complex to form the FANCM-MHF complex.

It is found in the nucleus. It carries out the reaction ATP + H2O = ADP + phosphate + H(+). ATP-dependent DNA helicase involved in DNA damage repair by homologous recombination and in genome maintenance. Capable of unwinding D-loops. Plays a role in limiting crossover recombinants during mitotic DNA double-strand break (DSB) repair. Component of a FANCM-MHF complex which promotes gene conversion at blocked replication forks, probably by reversal of the stalled fork. The polypeptide is ATP-dependent DNA helicase mph1 (Neosartorya fischeri (strain ATCC 1020 / DSM 3700 / CBS 544.65 / FGSC A1164 / JCM 1740 / NRRL 181 / WB 181) (Aspergillus fischerianus)).